A 577-amino-acid chain; its full sequence is Anthranilate synthase alpha subunit 1, chloroplastic (577 aa).

The N-terminal 34 residues, 1–34 (MASLVLSLRIAPSTPPLGLGGGRFRGRRGAVACR), are a transit peptide targeting the chloroplast.

This sequence belongs to the anthranilate synthase component I family. Heterotetramer consisting of two non-identical subunits: a beta subunit and a large alpha subunit.

The protein localises to the plastid. Its subcellular location is the chloroplast. It carries out the reaction chorismate + L-glutamine = anthranilate + pyruvate + L-glutamate + H(+). It participates in amino-acid biosynthesis; L-tryptophan biosynthesis; L-tryptophan from chorismate: step 1/5. With respect to regulation, feedback inhibition by tryptophan. Its function is as follows. Part of a heterotetrameric complex that catalyzes the two-step biosynthesis of anthranilate, an intermediate in the biosynthesis of L-tryptophan. In the first step, the glutamine-binding beta subunit of anthranilate synthase (AS) provides the glutamine amidotransferase activity which generates ammonia as a substrate that, along with chorismate, is used in the second step, catalyzed by the large alpha subunit of AS to produce anthranilate. The sequence is that of Anthranilate synthase alpha subunit 1, chloroplastic from Oryza sativa subsp. japonica (Rice).